Consider the following 1003-residue polypeptide: Methyl-CpG-binding domain protein 6 (1003 aa).

The region spanning 13–83 (AGGPAATPVP…KVFNFDPLAP (71 aa)) is the MBD domain. Residues 59–70 (DGTCKCGLECPL) are required for interaction with ASXL1/2/3. Disordered stretches follow at residues 123–222 (CSHS…PPPA), 241–302 (VPSD…ATMH), 334–619 (AKAQ…SAPP), 631–659 (ALGP…GLGD), 684–736 (ASLD…PQLL), and 753–1003 (SSPG…KLAP). Composition is skewed to pro residues over residues 142–157 (PGPP…PPTT) and 168–196 (QDPP…PDPV). Positions 252 to 262 (HASSSPPSDSP) are enriched in low complexity. A compositionally biased stretch (pro residues) spans 273–293 (PPLPPSNNPPGPPGPPGPATQ). The span at 351–363 (AQAPSAAHASPRP) shows a compositional bias: low complexity. A compositionally biased stretch (pro residues) spans 393–409 (APAPVPQPFPLPEPSQP). Over residues 410–428 (ILPSVLSLLGLPTPGPSHS) the composition is skewed to low complexity. The span at 441 to 458 (LPPPPALSSGSPPQPRHP) shows a compositional bias: pro residues. Composition is skewed to low complexity over residues 462–500 (SLPG…PSDG) and 533–550 (GAGF…LSLG). The span at 571 to 590 (QPPPEPLLPPPGGPGPPSAP) shows a compositional bias: pro residues. Low complexity predominate over residues 591–604 (GEPEGPSLLVASLL). The span at 605 to 618 (SPPPSDLLPPPSAP) shows a compositional bias: pro residues. Positions 636 to 650 (AGDGEGSAEGAGGPN) are enriched in gly residues. Residues 708–719 (TSSVTTATTDPG) show a composition bias toward polar residues. Residues 768–798 (LLSSQLGLQLLPGGGAPPALSEASSPLACLL) are compositionally biased toward low complexity. Residues 805 to 817 (PEQPDAPCLPPES) show a composition bias toward pro residues. Residues 818–837 (PASALEPEPARPPLSALAPP) show a composition bias toward low complexity. Residues 947 to 958 (RKSRRGRRRKYN) show a composition bias toward basic residues. Residues 960–969 (ARNSSSSRQD) show a composition bias toward polar residues. The segment covering 989–1003 (RPGRPAKNKRRKLAP) has biased composition (basic residues).

As to quaternary structure, core component of the polycomb repressive deubiquitinase (PR-DUB) complex, at least composed of BAP1, one of ASXL1, ASXL2 or (probably) ASXL3, and one of MBD5 or MBD6. Distinct combinations of ASXL and MBD proteins may preferentially bind specific histone modification marks. The PR-DUB core associates with a number of accessory proteins, including FOXK1, FOXK2, KDM1B, HCFC1 and OGT; KDM1B specifically associates with ASXL2 PR-DUB complexes. Interacts (via MBD domain) with ASXL1, ASXL2 and ASXL3 (via PHD domain); the interaction is probably direct, mediates association with other PR-DUB complex core components. Expressed at highest levels in adult testis.

The protein localises to the nucleus. It is found in the chromosome. In terms of biological role, non-catalytic component of the polycomb repressive deubiquitinase (PR-DUB) complex, a complex that specifically mediates deubiquitination of histone H2A monoubiquitinated at 'Lys-120' (H2AK119ub1). Important for stability of PR-DUB components and stimulating its ubiquitinase activity. As part of the PR-DUB complex, associates with chromatin enriched in histone marks H3K4me1, H3K4me3, and H3K27Ac, but not in H3K27me3. MBD5 and MBD6 containing complexes associate with distinct chromatin regions enriched in genes involved in different pathways. Heterochromatin recruitment is not mediated by DNA methylation. The PR-DUB complex is an epigenetic regulator of gene expression, including genes involved in development, cell communication, signaling, cell proliferation and cell viability; may promote cancer cell growth. This Mus musculus (Mouse) protein is Methyl-CpG-binding domain protein 6 (Mbd6).